The primary structure comprises 135 residues: Ribosome-binding factor A (135 aa).

This sequence belongs to the RbfA family. Monomer. Binds 30S ribosomal subunits, but not 50S ribosomal subunits or 70S ribosomes.

The protein localises to the cytoplasm. Its function is as follows. One of several proteins that assist in the late maturation steps of the functional core of the 30S ribosomal subunit. Associates with free 30S ribosomal subunits (but not with 30S subunits that are part of 70S ribosomes or polysomes). Required for efficient processing of 16S rRNA. May interact with the 5'-terminal helix region of 16S rRNA. This chain is Ribosome-binding factor A, found in Sinorhizobium fredii (strain NBRC 101917 / NGR234).